Here is a 241-residue protein sequence, read N- to C-terminus: Phosphoadenosine 5'-phosphosulfate reductase (241 aa).

Residue Cys235 is the Nucleophile; cysteine thiosulfonate intermediate of the active site.

Belongs to the PAPS reductase family. CysH subfamily.

It is found in the cytoplasm. It catalyses the reaction [thioredoxin]-disulfide + sulfite + adenosine 3',5'-bisphosphate + 2 H(+) = [thioredoxin]-dithiol + 3'-phosphoadenylyl sulfate. The protein operates within sulfur metabolism; hydrogen sulfide biosynthesis; sulfite from sulfate: step 3/3. In terms of biological role, catalyzes the formation of sulfite from phosphoadenosine 5'-phosphosulfate (PAPS) using thioredoxin as an electron donor. In Xanthomonas campestris pv. campestris (strain 8004), this protein is Phosphoadenosine 5'-phosphosulfate reductase.